Consider the following 603-residue polypeptide: UvrABC system protein C (603 aa).

The GIY-YIG domain occupies 15 to 92; sequence DQPGCYLMKD…IKKHDPRFNI (78 aa). Positions 197–232 constitute a UVR domain; that stretch reads KTVKNDLMKKMQEAAENMEFEKAGEFRDQINAIETT.

This sequence belongs to the UvrC family. As to quaternary structure, interacts with UvrB in an incision complex.

It is found in the cytoplasm. In terms of biological role, the UvrABC repair system catalyzes the recognition and processing of DNA lesions. UvrC both incises the 5' and 3' sides of the lesion. The N-terminal half is responsible for the 3' incision and the C-terminal half is responsible for the 5' incision. The protein is UvrABC system protein C of Listeria monocytogenes serotype 4b (strain CLIP80459).